Here is a 416-residue protein sequence, read N- to C-terminus: Cyclin-dependent kinase 8 (416 aa).

Residues 1–15 (MDYDFKVKLTGERER) form an interaction with CCNC region. The region spanning 21-287 (EYEGCKVGRG…SEQAMQDPYF (267 aa)) is the Protein kinase domain. ATP-binding positions include 27-35 (VGRGTYGHV) and Lys-52. Residue Asp-151 is the Proton acceptor of the active site. The interval 313–416 (EEEPDDKGDK…PQYSHQTHRY (104 aa)) is disordered. Residues 325-343 (QQQQQGNNHTNGTGHPGNQ) are compositionally biased toward low complexity. Polar residues-rich tracts occupy residues 361–378 (PTTT…QRSN) and 386–416 (PGPS…THRY).

The protein belongs to the protein kinase superfamily. CMGC Ser/Thr protein kinase family. CDC2/CDKX subfamily. In terms of assembly, component of the Mediator complex. Interacts with ccnc. Mg(2+) serves as cofactor.

It is found in the nucleus. The enzyme catalyses L-seryl-[protein] + ATP = O-phospho-L-seryl-[protein] + ADP + H(+). It carries out the reaction L-threonyl-[protein] + ATP = O-phospho-L-threonyl-[protein] + ADP + H(+). The catalysed reaction is [DNA-directed RNA polymerase] + ATP = phospho-[DNA-directed RNA polymerase] + ADP + H(+). In terms of biological role, component of the Mediator complex, a coactivator involved in regulated gene transcription of nearly all RNA polymerase II-dependent genes. Mediator functions as a bridge to convey information from gene-specific regulatory proteins to the basal RNA polymerase II transcription machinery. Mediator is recruited to promoters by direct interactions with regulatory proteins and serves as a scaffold for the assembly of a functional pre-initiation complex with RNA polymerase II and the general transcription factors. Phosphorylates the CTD (C-terminal domain) of the large subunit of RNA polymerase II (RNAp II), which may inhibit the formation of a transcription initiation complex. This chain is Cyclin-dependent kinase 8 (cdk8), found in Xenopus laevis (African clawed frog).